A 476-amino-acid chain; its full sequence is UDP-N-acetylmuramate--L-alanine ligase (476 aa).

115–121 (GTHGKTT) is an ATP binding site.

This sequence belongs to the MurCDEF family.

Its subcellular location is the cytoplasm. The enzyme catalyses UDP-N-acetyl-alpha-D-muramate + L-alanine + ATP = UDP-N-acetyl-alpha-D-muramoyl-L-alanine + ADP + phosphate + H(+). Its pathway is cell wall biogenesis; peptidoglycan biosynthesis. Functionally, cell wall formation. In Paramagnetospirillum magneticum (strain ATCC 700264 / AMB-1) (Magnetospirillum magneticum), this protein is UDP-N-acetylmuramate--L-alanine ligase.